The following is a 280-amino-acid chain: MDIKINDITLGNNLPFVLFGGINVLESLDSTLQTCAHYVEVTRKLGIPYIFKASFDKANRSSIHSYRGVGLEEGLKIFEKVKAEFGIPVITDVHEPHQCQPVAEVCDVIQLPAFLARQTDLVAAMAETGNVINIKKPQFLSPSQMKNIVEKFHEADNGKLILCERGSSFGYDNLVVDILGFGVMKQTCGNLPVIFDVTHSLQTRDAGSAASGGRRAQALDLALAGMATRLAGLFLESHPDPKLAKCDGPSALPLHLLEDFLIRIKALDDLIKSQPILTIE.

This sequence belongs to the KdsA family.

It localises to the cytoplasm. The enzyme catalyses D-arabinose 5-phosphate + phosphoenolpyruvate + H2O = 3-deoxy-alpha-D-manno-2-octulosonate-8-phosphate + phosphate. It participates in carbohydrate biosynthesis; 3-deoxy-D-manno-octulosonate biosynthesis; 3-deoxy-D-manno-octulosonate from D-ribulose 5-phosphate: step 2/3. It functions in the pathway bacterial outer membrane biogenesis; lipopolysaccharide biosynthesis. The polypeptide is 2-dehydro-3-deoxyphosphooctonate aldolase (Neisseria meningitidis serogroup A / serotype 4A (strain DSM 15465 / Z2491)).